Reading from the N-terminus, the 273-residue chain is Mediator of RNA polymerase II transcription subunit 18 (273 aa).

A compositionally biased stretch (low complexity) spans 90–106 (GAQSSAASSGDPDAPMS). Residues 90-114 (GAQSSAASSGDPDAPMSGTDTGTNF) are disordered.

It belongs to the Mediator complex subunit 18 family. In terms of assembly, component of the Mediator complex.

The protein resides in the nucleus. Component of the Mediator complex, a coactivator involved in the regulated transcription of nearly all RNA polymerase II-dependent genes. Mediator functions as a bridge to convey information from gene-specific regulatory proteins to the basal RNA polymerase II transcription machinery. Mediator is recruited to promoters by direct interactions with regulatory proteins and serves as a scaffold for the assembly of a functional preinitiation complex with RNA polymerase II and the general transcription factors. This is Mediator of RNA polymerase II transcription subunit 18 (srb5) from Aspergillus oryzae (strain ATCC 42149 / RIB 40) (Yellow koji mold).